Consider the following 273-residue polypeptide: 3-methyl-2-oxobutanoate hydroxymethyltransferase (273 aa).

Mg(2+)-binding residues include Asp-49 and Asp-88. 3-methyl-2-oxobutanoate is bound by residues 49–50 (DS), Asp-88, and Lys-118. Residue Glu-120 coordinates Mg(2+). The active-site Proton acceptor is Glu-187.

It belongs to the PanB family. Homodecamer; pentamer of dimers. The cofactor is Mg(2+).

It is found in the cytoplasm. The catalysed reaction is 3-methyl-2-oxobutanoate + (6R)-5,10-methylene-5,6,7,8-tetrahydrofolate + H2O = 2-dehydropantoate + (6S)-5,6,7,8-tetrahydrofolate. Its pathway is cofactor biosynthesis; (R)-pantothenate biosynthesis; (R)-pantoate from 3-methyl-2-oxobutanoate: step 1/2. In terms of biological role, catalyzes the reversible reaction in which hydroxymethyl group from 5,10-methylenetetrahydrofolate is transferred onto alpha-ketoisovalerate to form ketopantoate. In Sinorhizobium medicae (strain WSM419) (Ensifer medicae), this protein is 3-methyl-2-oxobutanoate hydroxymethyltransferase.